A 301-amino-acid polypeptide reads, in one-letter code: Sulfate adenylyltransferase subunit 2 (301 aa).

The disordered stretch occupies residues 279–301 (RQGRLIDRDEAGSMEKKKREGYF).

The protein belongs to the PAPS reductase family. CysD subfamily. In terms of assembly, heterodimer composed of CysD, the smaller subunit, and CysN.

It carries out the reaction sulfate + ATP + H(+) = adenosine 5'-phosphosulfate + diphosphate. Its pathway is sulfur metabolism; hydrogen sulfide biosynthesis; sulfite from sulfate: step 1/3. In terms of biological role, with CysN forms the ATP sulfurylase (ATPS) that catalyzes the adenylation of sulfate producing adenosine 5'-phosphosulfate (APS) and diphosphate, the first enzymatic step in sulfur assimilation pathway. APS synthesis involves the formation of a high-energy phosphoric-sulfuric acid anhydride bond driven by GTP hydrolysis by CysN coupled to ATP hydrolysis by CysD. This Mesorhizobium japonicum (strain LMG 29417 / CECT 9101 / MAFF 303099) (Mesorhizobium loti (strain MAFF 303099)) protein is Sulfate adenylyltransferase subunit 2.